A 355-amino-acid polypeptide reads, in one-letter code: Peptide chain release factor 1 (355 aa).

Gln-233 bears the N5-methylglutamine mark. Residues 280–293 are compositionally biased toward basic and acidic residues; sequence ERRKKEQERADSRR. The tract at residues 280-306 is disordered; it reads ERRKKEQERADSRRGQVGSGNRSERIR.

It belongs to the prokaryotic/mitochondrial release factor family. Methylated by PrmC. Methylation increases the termination efficiency of RF1.

The protein resides in the cytoplasm. Its function is as follows. Peptide chain release factor 1 directs the termination of translation in response to the peptide chain termination codons UAG and UAA. This chain is Peptide chain release factor 1, found in Rickettsia africae (strain ESF-5).